Here is a 146-residue protein sequence, read N- to C-terminus: 3-dehydroquinate dehydratase (146 aa).

Tyr-22 functions as the Proton acceptor in the catalytic mechanism. Positions 74, 80, and 87 each coordinate substrate. His-100 serves as the catalytic Proton donor. Substrate-binding positions include 101–102 (LS) and Arg-111.

It belongs to the type-II 3-dehydroquinase family. Homododecamer.

The enzyme catalyses 3-dehydroquinate = 3-dehydroshikimate + H2O. Its pathway is metabolic intermediate biosynthesis; chorismate biosynthesis; chorismate from D-erythrose 4-phosphate and phosphoenolpyruvate: step 3/7. Catalyzes a trans-dehydration via an enolate intermediate. In Clostridium perfringens (strain SM101 / Type A), this protein is 3-dehydroquinate dehydratase.